Consider the following 242-residue polypeptide: Polycomb group RING finger protein 3 (242 aa).

The RING-type zinc-finger motif lies at 17–56 (CRLCNGYLIDATTVTECLHTFCRSCLVKYLEENNTCPTCR). Residues 120-149 (EAHRNGETKTDEHTHKEPPEEKQEEDHDYH) are disordered.

As to quaternary structure, component of a PRC1-like complex.

The protein localises to the nucleus. Functionally, component of a Polycomb group (PcG) multiprotein PRC1-like complex, a complex class required to maintain the transcriptionally repressive state of many genes, including Hox genes, throughout development. PcG PRC1 complex acts via chromatin remodeling and modification of histones; it mediates monoubiquitination of histone H2A 'Lys-119', rendering chromatin heritably changed in its expressibility. Within the PRC1-like complex, regulates RNF2 ubiquitin ligase activity. In Xenopus tropicalis (Western clawed frog), this protein is Polycomb group RING finger protein 3 (pcgf3).